Consider the following 377-residue polypeptide: Nitric oxide reductase FlRd-NAD(+) reductase (377 aa).

The protein belongs to the FAD-dependent oxidoreductase family. FAD serves as cofactor.

The protein localises to the cytoplasm. The catalysed reaction is 2 reduced [nitric oxide reductase rubredoxin domain] + NAD(+) + H(+) = 2 oxidized [nitric oxide reductase rubredoxin domain] + NADH. Its pathway is nitrogen metabolism; nitric oxide reduction. In terms of biological role, one of at least two accessory proteins for anaerobic nitric oxide (NO) reductase. Reduces the rubredoxin moiety of NO reductase. In Shigella boydii serotype 4 (strain Sb227), this protein is Nitric oxide reductase FlRd-NAD(+) reductase (norW).